The primary structure comprises 83 residues: MLKSFLIFLVRFYQKNISPAFPASCRYCPTCSTYMIEAIQKHGLKGVLMGIARILRCHPLAHGGNDPVPDHFSLRRNKTDISD.

Residues 63–83 form a disordered region; the sequence is GGNDPVPDHFSLRRNKTDISD. The span at 68–83 shows a compositional bias: basic and acidic residues; sequence VPDHFSLRRNKTDISD.

It belongs to the UPF0161 family.

It localises to the cell membrane. Could be involved in insertion of integral membrane proteins into the membrane. This is Putative membrane protein insertion efficiency factor from Streptococcus agalactiae serotype III (strain NEM316).